Reading from the N-terminus, the 182-residue chain is Dynactin subunit 5 (182 aa).

N-acetylmethionine is present on M1.

It belongs to the dynactin subunits 5/6 family. Dynactin subunit 5 subfamily. Subunit of dynactin, a multiprotein complex part of a tripartite complex with dynein and a adapter, such as BICDL1, BICD2 or HOOK3. The dynactin complex is built around ACTR1A/ACTB filament and consists of an actin-related filament composed of a shoulder domain, a pointed end and a barbed end. Its length is defined by its flexible shoulder domain. The soulder is composed of 2 DCTN1 subunits, 4 DCTN2 and 2 DCTN3. The 4 DCNT2 (via N-terminus) bind the ACTR1A filament and act as molecular rulers to determine the length. The pointed end is important for binding dynein-dynactin cargo adapters. Consists of 4 subunits: ACTR10, DCNT4, DCTN5 and DCTN6. Within the complex DCTN6 forms a heterodimer with DCTN5. The barbed end is composed of a CAPZA1:CAPZB heterodimers, which binds ACTR1A/ACTB filament and dynactin and stabilizes dynactin. Interacts with N4BP2L1.

The protein resides in the cytoplasm. It is found in the cytoskeleton. The protein localises to the chromosome. Its subcellular location is the centromere. It localises to the kinetochore. Its function is as follows. Part of the dynactin complex that activates the molecular motor dynein for ultra-processive transport along microtubules. This chain is Dynactin subunit 5 (DCTN5), found in Pongo abelii (Sumatran orangutan).